The primary structure comprises 936 residues: ABC transporter A family member 5 (936 aa).

7 consecutive transmembrane segments (helical) span residues 34–54 (LIVIPFYLCVLLVGIQVLFDT), 340–360 (ASLIGPIFFTWVILLLFPVML), 393–413 (FLAISIVYIICLMIFGSAIGL), 422–442 (SIQFIFYFLCINLQISIAFLV), 454–474 (VAAYLYVFGSGLLGAFLFQFL), 484–501 (WIYIMELYPGFSLYRGLY), and 527–547 (AMEEIFYIIIVEWFVALIAAY). An ABC transporter domain is found at 614 to 851 (IVCDNLKKVY…YGGSYVLTMT (238 aa)). 652-659 (GPNGAGKT) provides a ligand contact to ATP.

The protein belongs to the ABC transporter superfamily. ABCA family. CPR flippase (TC 3.A.1.211) subfamily.

The protein localises to the membrane. In Arabidopsis thaliana (Mouse-ear cress), this protein is ABC transporter A family member 5 (ABCA5).